The primary structure comprises 335 residues: UPF0353 protein BCG_1543 (335 aa).

A run of 2 helical transmembrane segments spans residues 18–38 (WFFL…LMQL) and 67–87 (VPAI…AGPT). The region spanning 98 to 294 (VVMLVIDVSQ…AELRAVYSSL (197 aa)) is the VWFA domain. Residues 309–329 (VGWLRLGALALALAALAALLI) traverse the membrane as a helical segment.

The protein belongs to the UPF0353 family.

Its subcellular location is the cell membrane. The polypeptide is UPF0353 protein BCG_1543 (Mycobacterium bovis (strain BCG / Pasteur 1173P2)).